We begin with the raw amino-acid sequence, 295 residues long: Phosphoenolpyruvate phosphomutase (295 aa).

Asp-58 (nucleophile) is an active-site residue. Asp-58 provides a ligand contact to Mg(2+).

This sequence belongs to the isocitrate lyase/PEP mutase superfamily. PEP mutase family. As to quaternary structure, homotetramer. Mg(2+) is required as a cofactor.

It carries out the reaction phosphoenolpyruvate + H(+) = 3-phosphonopyruvate. It participates in phosphorus metabolism; phosphonate biosynthesis. Its function is as follows. Formation of a carbon-phosphorus bond by converting phosphoenolpyruvate (PEP) to phosphonopyruvate (P-Pyr). The chain is Phosphoenolpyruvate phosphomutase from Mytilus edulis (Blue mussel).